Reading from the N-terminus, the 340-residue chain is Glycerol-3-phosphate dehydrogenase [NAD(P)+] (340 aa).

NADPH-binding residues include Ser13, Tyr14, and Lys108. Lys108, Gly137, and Thr139 together coordinate sn-glycerol 3-phosphate. Residue Ala141 participates in NADPH binding. Sn-glycerol 3-phosphate-binding residues include Lys193, Asp246, Ser256, Arg257, and Asn258. Lys193 serves as the catalytic Proton acceptor. Arg257 contacts NADPH. 2 residues coordinate NADPH: Ile281 and Glu283.

Belongs to the NAD-dependent glycerol-3-phosphate dehydrogenase family.

It is found in the cytoplasm. The catalysed reaction is sn-glycerol 3-phosphate + NAD(+) = dihydroxyacetone phosphate + NADH + H(+). It catalyses the reaction sn-glycerol 3-phosphate + NADP(+) = dihydroxyacetone phosphate + NADPH + H(+). It participates in membrane lipid metabolism; glycerophospholipid metabolism. Its function is as follows. Catalyzes the reduction of the glycolytic intermediate dihydroxyacetone phosphate (DHAP) to sn-glycerol 3-phosphate (G3P), the key precursor for phospholipid synthesis. This chain is Glycerol-3-phosphate dehydrogenase [NAD(P)+], found in Bartonella henselae (strain ATCC 49882 / DSM 28221 / CCUG 30454 / Houston 1) (Rochalimaea henselae).